The following is a 977-amino-acid chain: Poly [ADP-ribose] polymerase 1 (977 aa).

2 consecutive PARP-type zinc fingers follow at residues 8–91 and 104–179; these read WKAE…GSAP and CTIE…KKDA. Zn(2+) is bound by residues Cys20, Cys23, His52, Cys55, Cys116, Cys119, His141, and Cys144. Disordered stretches follow at residues 177–199 and 218–237; these read KDAPSSGQTSSKGSKRKNNQNDI and DKGKAVVSHDSNANSSDLQE. In terms of domain architecture, PADR1 zinc-binding spans 227 to 365; that stretch reads DSNANSSDLQ…AKKPERVLPP (139 aa). Residues 254–288 form the SAP domain; the sequence is KKHVSTAELRNMLEANGQDTSGPERHLLDRCADGM. The tract at residues 291–335 is zinc ribbon; that stretch reads GALGTCPVCSSFLYYHGGQYHCSGYVSEWSKCTYSTTEPVRSKKK. 4 residues coordinate Zn(2+): Cys296, Cys299, Cys312, and Cys322. Positions 381–473 constitute a BRCT domain; sequence SFLSEGLDKL…RVLPFDLYKV (93 aa). The WGR domain maps to 504-604; the sequence is TGHILEDGKS…TNFQKQPGKF (101 aa). One can recognise a PARP alpha-helical domain in the interval 626–745; sequence KSSLPPQLLE…DIEIASKLVG (120 aa). In terms of domain architecture, PARP catalytic spans 752–977; sequence ESLDDKYKKL…LLKVRFHHKR (226 aa).

The protein belongs to the ARTD/PARP family.

The protein localises to the nucleus. The enzyme catalyses NAD(+) + (ADP-D-ribosyl)n-acceptor = nicotinamide + (ADP-D-ribosyl)n+1-acceptor + H(+).. It catalyses the reaction L-aspartyl-[protein] + NAD(+) = 4-O-(ADP-D-ribosyl)-L-aspartyl-[protein] + nicotinamide. The catalysed reaction is L-glutamyl-[protein] + NAD(+) = 5-O-(ADP-D-ribosyl)-L-glutamyl-[protein] + nicotinamide. Functionally, involved in the base excision repair (BER) pathway, by catalyzing the poly(ADP-ribosyl)ation of a limited number of acceptor proteins involved in chromatin architecture and in DNA metabolism. This modification follows DNA damages and appears as an obligatory step in a detection/signaling pathway leading to the reparation of DNA strand breaks. The protein is Poly [ADP-ribose] polymerase 1 (PARP1) of Oryza sativa subsp. japonica (Rice).